Here is a 156-residue protein sequence, read N- to C-terminus: Small ribosomal subunit protein uS7 (156 aa).

Belongs to the universal ribosomal protein uS7 family. Part of the 30S ribosomal subunit. Contacts proteins S9 and S11.

Functionally, one of the primary rRNA binding proteins, it binds directly to 16S rRNA where it nucleates assembly of the head domain of the 30S subunit. Is located at the subunit interface close to the decoding center, probably blocks exit of the E-site tRNA. In Levilactobacillus brevis (strain ATCC 367 / BCRC 12310 / CIP 105137 / JCM 1170 / LMG 11437 / NCIMB 947 / NCTC 947) (Lactobacillus brevis), this protein is Small ribosomal subunit protein uS7.